The following is a 1143-amino-acid chain: ATP-dependent helicase/deoxyribonuclease subunit B (1143 aa).

One can recognise a UvrD-like helicase ATP-binding domain in the interval 1-274; it reads MNYMHLGRAG…YGQTVKFQST (274 aa). 7–14 serves as a coordination point for ATP; the sequence is GRAGTGKT. Positions 267-565 constitute a UvrD-like helicase C-terminal domain; it reads QTVKFQSTGL…RFSLVPPSLD (299 aa). [4Fe-4S] cluster-binding residues include Cys782, Cys1104, Cys1107, and Cys1113.

It belongs to the helicase family. AddB/RexB type 1 subfamily. As to quaternary structure, heterodimer of AddA and AddB. Requires Mg(2+) as cofactor. It depends on [4Fe-4S] cluster as a cofactor.

The heterodimer acts as both an ATP-dependent DNA helicase and an ATP-dependent, dual-direction single-stranded exonuclease. Recognizes the chi site generating a DNA molecule suitable for the initiation of homologous recombination. The AddB subunit has 5' -&gt; 3' nuclease activity but not helicase activity. The protein is ATP-dependent helicase/deoxyribonuclease subunit B of Exiguobacterium sibiricum (strain DSM 17290 / CCUG 55495 / CIP 109462 / JCM 13490 / 255-15).